Consider the following 318-residue polypeptide: Bis(5'-nucleosyl)-tetraphosphatase, symmetrical (318 aa).

The disordered stretch occupies residues P269–D318. The segment covering A282–G297 has biased composition (basic residues). Residues N298–P311 are compositionally biased toward low complexity.

Belongs to the Ap4A hydrolase family.

It carries out the reaction P(1),P(4)-bis(5'-adenosyl) tetraphosphate + H2O = 2 ADP + 2 H(+). In terms of biological role, hydrolyzes diadenosine 5',5'''-P1,P4-tetraphosphate to yield ADP. The chain is Bis(5'-nucleosyl)-tetraphosphatase, symmetrical from Xanthomonas euvesicatoria pv. vesicatoria (strain 85-10) (Xanthomonas campestris pv. vesicatoria).